Consider the following 393-residue polypeptide: Phosphopentomutase (393 aa).

The Mn(2+) site is built by Asp14, Asp287, His292, Asp328, His329, and His340.

It belongs to the phosphopentomutase family. It depends on Mn(2+) as a cofactor.

It localises to the cytoplasm. The catalysed reaction is 2-deoxy-alpha-D-ribose 1-phosphate = 2-deoxy-D-ribose 5-phosphate. The enzyme catalyses alpha-D-ribose 1-phosphate = D-ribose 5-phosphate. Its pathway is carbohydrate degradation; 2-deoxy-D-ribose 1-phosphate degradation; D-glyceraldehyde 3-phosphate and acetaldehyde from 2-deoxy-alpha-D-ribose 1-phosphate: step 1/2. In terms of biological role, isomerase that catalyzes the conversion of deoxy-ribose 1-phosphate (dRib-1-P) and ribose 1-phosphate (Rib-1-P) to deoxy-ribose 5-phosphate (dRib-5-P) and ribose 5-phosphate (Rib-5-P), respectively. In Geobacillus stearothermophilus (Bacillus stearothermophilus), this protein is Phosphopentomutase.